A 227-amino-acid polypeptide reads, in one-letter code: MVKLPSLKFLRRSTDETPNVSETASHSTVLDVGAEKLGKTYARALLAATQADGSTDAVVSDLNAICDEALLHNPKLQLAFQSPQIDADEKCRVVDRLFGGNSHPTLIKLMKVMAKRGRLGYLVAVRDAAVDLFDEAAGRVVAEVRTAVPMTEQLRGEVTQQLSSRFGKTVRLRESVDTELIGGMVIRVGDTVFDSSVASRLDKLGKSAAAGFARQLIEQSDRFSSSS.

This sequence belongs to the ATPase delta chain family. As to quaternary structure, F-type ATPases have 2 components, F(1) - the catalytic core - and F(0) - the membrane proton channel. F(1) has five subunits: alpha(3), beta(3), gamma(1), delta(1), epsilon(1). F(0) has three main subunits: a(1), b(2) and c(10-14). The alpha and beta chains form an alternating ring which encloses part of the gamma chain. F(1) is attached to F(0) by a central stalk formed by the gamma and epsilon chains, while a peripheral stalk is formed by the delta and b chains.

It is found in the cell inner membrane. F(1)F(0) ATP synthase produces ATP from ADP in the presence of a proton or sodium gradient. F-type ATPases consist of two structural domains, F(1) containing the extramembraneous catalytic core and F(0) containing the membrane proton channel, linked together by a central stalk and a peripheral stalk. During catalysis, ATP synthesis in the catalytic domain of F(1) is coupled via a rotary mechanism of the central stalk subunits to proton translocation. In terms of biological role, this protein is part of the stalk that links CF(0) to CF(1). It either transmits conformational changes from CF(0) to CF(1) or is implicated in proton conduction. This is ATP synthase subunit delta from Rhodopirellula baltica (strain DSM 10527 / NCIMB 13988 / SH1).